Reading from the N-terminus, the 197-residue chain is Adenylate kinase (197 aa).

16-21 (GAGKGT) is an ATP binding site. The segment at 36–65 (STGDILRDHVARGTELGQQVKPILDAGHLV) is NMP. AMP contacts are provided by residues T37, R42, 63-65 (HLV), 90-93 (GFPR), and Q97. The tract at residues 131-147 (ERGNQAQARGEAVRSDD) is LID. R132 is a binding site for ATP. Residues R144 and R155 each contribute to the AMP site. Residue G183 participates in ATP binding.

It belongs to the adenylate kinase family. In terms of assembly, monomer.

The protein localises to the cytoplasm. It carries out the reaction AMP + ATP = 2 ADP. Its pathway is purine metabolism; AMP biosynthesis via salvage pathway; AMP from ADP: step 1/1. Its function is as follows. Catalyzes the reversible transfer of the terminal phosphate group between ATP and AMP. Plays an important role in cellular energy homeostasis and in adenine nucleotide metabolism. The polypeptide is Adenylate kinase (Deinococcus deserti (strain DSM 17065 / CIP 109153 / LMG 22923 / VCD115)).